A 216-amino-acid polypeptide reads, in one-letter code: Peptide deformylase (216 aa).

2 residues coordinate Fe cation: Cys134 and His178. Residue Glu179 is part of the active site. His182 is a binding site for Fe cation.

It belongs to the polypeptide deformylase family. The cofactor is Fe(2+).

It carries out the reaction N-terminal N-formyl-L-methionyl-[peptide] + H2O = N-terminal L-methionyl-[peptide] + formate. Its function is as follows. Removes the formyl group from the N-terminal Met of newly synthesized proteins. Requires at least a dipeptide for an efficient rate of reaction. N-terminal L-methionine is a prerequisite for activity but the enzyme has broad specificity at other positions. In Mycoplasma pneumoniae (strain ATCC 29342 / M129 / Subtype 1) (Mycoplasmoides pneumoniae), this protein is Peptide deformylase.